The following is a 436-amino-acid chain: 3-ketoacyl-CoA thiolase (436 aa).

Cys99 serves as the catalytic Acyl-thioester intermediate. Active-site proton acceptor residues include His392 and Cys422.

The protein belongs to the thiolase-like superfamily. Thiolase family. Heterotetramer of two alpha chains (FadJ) and two beta chains (FadI).

Its subcellular location is the cytoplasm. It catalyses the reaction an acyl-CoA + acetyl-CoA = a 3-oxoacyl-CoA + CoA. The protein operates within lipid metabolism; fatty acid beta-oxidation. In terms of biological role, catalyzes the final step of fatty acid oxidation in which acetyl-CoA is released and the CoA ester of a fatty acid two carbons shorter is formed. The sequence is that of 3-ketoacyl-CoA thiolase from Shewanella loihica (strain ATCC BAA-1088 / PV-4).